Consider the following 351-residue polypeptide: 3-dehydroquinate synthase (351 aa).

NAD(+) is bound by residues 60–65 (DGEEYK), 94–98 (GVISD), 118–119 (TT), Lys131, Lys140, and 158–161 (FLKT). Zn(2+) is bound by residues Glu173, His239, and His256.

Belongs to the sugar phosphate cyclases superfamily. Dehydroquinate synthase family. Requires NAD(+) as cofactor. It depends on Co(2+) as a cofactor. Zn(2+) serves as cofactor.

The protein localises to the cytoplasm. The catalysed reaction is 7-phospho-2-dehydro-3-deoxy-D-arabino-heptonate = 3-dehydroquinate + phosphate. Its pathway is metabolic intermediate biosynthesis; chorismate biosynthesis; chorismate from D-erythrose 4-phosphate and phosphoenolpyruvate: step 2/7. Its function is as follows. Catalyzes the conversion of 3-deoxy-D-arabino-heptulosonate 7-phosphate (DAHP) to dehydroquinate (DHQ). The sequence is that of 3-dehydroquinate synthase from Campylobacter jejuni subsp. jejuni serotype O:2 (strain ATCC 700819 / NCTC 11168).